The primary structure comprises 199 residues: MSNMEKHLFNLKFAAKELSRSAKKCDKEEKAEKAKIKKAIQKGNMEVARIHAENAIRQKNQAVNFLRMSARVDAVAARVQTAVTMGKVTKSMAGVVKSMDATLKTMNLEKISALMDKFEHQFETLDVQTQQMEDTMSSTTTLTTPQNQVDMLLQEMADEAGLDLNMELPQGQTGSVGTSVASAEQDELSQRLARLRDQV.

Residues 26-48 (DKEEKAEKAKIKKAIQKGNMEVA) are a coiled coil. The segment at 132–156 (MEDTMSSTTTLTTPQNQVDMLLQEM) is interaction with IST1. Positions 167–199 (ELPQGQTGSVGTSVASAEQDELSQRLARLRDQV) are disordered. Residues 170–182 (QGQTGSVGTSVAS) show a composition bias toward polar residues. An interaction with SPAST region spans residues 174–199 (GSVGTSVASAEQDELSQRLARLRDQV). Positions 178-199 (TSVASAEQDELSQRLARLRDQV) form a coiled coil. Residues 180 to 196 (VASAEQDELSQRLARLR) form an interaction with VPS4A, MITD1 and STAMBP region. An interaction with VTA1 region spans residues 180 to 199 (VASAEQDELSQRLARLRDQV). The tract at residues 183–199 (AEQDELSQRLARLRDQV) is interaction with VPS4B. An MIT-interacting motif motif is present at residues 186-196 (DELSQRLARLR).

It belongs to the SNF7 family. As to quaternary structure, probable peripherally associated component of the endosomal sorting required for transport complex III (ESCRT-III). ESCRT-III components are thought to multimerize to form a flat lattice on the perimeter membrane of the endosome. Several assembly forms of ESCRT-III may exist that interact and act sequentially. Interacts with CHMP1A. Interacts with VTA1; the interaction probably involves the open conformation of CHMP1B. Interacts with CHMP2A. Interacts with VPS4A; the interaction is direct. Interacts with VPS4B; the interaction is direct. Interacts with SPAST (via MIT domain); the interaction is direct. Interacts with IST1. Interacts with MITD1. Interacts with STAMBP. As to expression, widely expressed. Expressed in pancreas, kidney, skeletal muscle, liver, lung, placenta and brain.

The protein localises to the cytoplasm. Its subcellular location is the cytosol. It is found in the endosome. It localises to the late endosome membrane. In terms of biological role, probable peripherally associated component of the endosomal sorting required for transport complex III (ESCRT-III) which is involved in multivesicular bodies (MVBs) formation and sorting of endosomal cargo proteins into MVBs. MVBs contain intraluminal vesicles (ILVs) that are generated by invagination and scission from the limiting membrane of the endosome and mostly are delivered to lysosomes enabling degradation of membrane proteins, such as stimulated growth factor receptors, lysosomal enzymes and lipids. The MVB pathway appears to require the sequential function of ESCRT-O, -I,-II and -III complexes. ESCRT-III proteins mostly dissociate from the invaginating membrane before the ILV is released. The ESCRT machinery also functions in topologically equivalent membrane fission events, such as the terminal stages of cytokinesis and the budding of enveloped viruses (HIV-1 and other lentiviruses). ESCRT-III proteins are believed to mediate the necessary vesicle extrusion and/or membrane fission activities, possibly in conjunction with the AAA ATPase VPS4. Involved in cytokinesis. Involved in recruiting VPS4A and/or VPS4B and SPAST to the midbody of dividing cells. Involved in HIV-1 p6- and p9-dependent virus release. The protein is Charged multivesicular body protein 1b (CHMP1B) of Homo sapiens (Human).